Reading from the N-terminus, the 240-residue chain is MTEQPPPGGSYPPPPPPPGPSGGHEPPPAAPPGGSGYAPPPPPSSGSGYPPPPPPPGGGAYPPPPPSAGGYAPPPPGPAIRTMPTESYTPWITRVLAAFIDWAPYVVLVGIGWVIMLVTQTSSCVTSISEYDVGQFCVSQPSMIGQLVQWLLSVGGLAYLVWNYGYRQGTIGSSIGKSVLKFKVVSETTGQPIGFGMSVVRQLAHFIDAIICFVGFLFPLWDAKRQTLADKIMTTVCVPI.

Composition is skewed to pro residues over residues 1-31 (MTEQPPPGGSYPPPPPPPGPSGGHEPPPAAP) and 38-78 (APPP…PPGP). Positions 1–78 (MTEQPPPGGS…GGYAPPPPGP (78 aa)) are disordered. One can recognise an RDD domain in the interval 89–233 (TPWITRVLAA…KRQTLADKIM (145 aa)). The next 3 membrane-spanning stretches (helical) occupy residues 98-118 (AFIDWAPYVVLVGIGWVIMLV), 142-162 (SMIGQLVQWLLSVGGLAYLVW), and 203-223 (LAHFIDAIICFVGFLFPLWDA).

It belongs to the mycobacterial Pra family.

It is found in the cell membrane. This is Proline-rich antigen homolog from Mycobacterium tuberculosis (strain CDC 1551 / Oshkosh).